Consider the following 352-residue polypeptide: Probable tyrosine-protein kinase DDB_G0290471 (352 aa).

Positions 51 to 333 constitute a Protein kinase domain; sequence IEYVCRLGSG…ISLNQIRSFY (283 aa). ATP contacts are provided by residues 57 to 65 and lysine 78; that span reads LGSGSLCRV. Residue aspartate 175 is the Proton acceptor of the active site.

The protein belongs to the protein kinase superfamily. TKL Tyr protein kinase family.

The enzyme catalyses L-tyrosyl-[protein] + ATP = O-phospho-L-tyrosyl-[protein] + ADP + H(+). The protein is Probable tyrosine-protein kinase DDB_G0290471 of Dictyostelium discoideum (Social amoeba).